Here is a 367-residue protein sequence, read N- to C-terminus: tRNA-specific 2-thiouridylase MnmA (367 aa).

Residues 11–18 and methionine 37 each bind ATP; that span reads GLSGGVDS. Residues 109 to 111 are interaction with target base in tRNA; the sequence is NPD. Residue cysteine 114 is the Nucleophile of the active site. Cysteine 114 and cysteine 211 are joined by a disulfide. Glycine 139 provides a ligand contact to ATP. The interaction with tRNA stretch occupies residues 161 to 163; that stretch reads KDQ. Catalysis depends on cysteine 211, which acts as the Cysteine persulfide intermediate.

This sequence belongs to the MnmA/TRMU family.

Its subcellular location is the cytoplasm. The enzyme catalyses S-sulfanyl-L-cysteinyl-[protein] + uridine(34) in tRNA + AH2 + ATP = 2-thiouridine(34) in tRNA + L-cysteinyl-[protein] + A + AMP + diphosphate + H(+). Functionally, catalyzes the 2-thiolation of uridine at the wobble position (U34) of tRNA, leading to the formation of s(2)U34. The sequence is that of tRNA-specific 2-thiouridylase MnmA from Mycoplasma genitalium (strain ATCC 33530 / DSM 19775 / NCTC 10195 / G37) (Mycoplasmoides genitalium).